The following is a 431-amino-acid chain: Histidinol dehydrogenase (431 aa).

NAD(+) contacts are provided by Y127, Q189, and N212. Substrate contacts are provided by S237, Q259, and H262. Zn(2+) contacts are provided by Q259 and H262. Catalysis depends on proton acceptor residues E326 and H327. The substrate site is built by H327, D360, E414, and H419. Position 360 (D360) interacts with Zn(2+). H419 is a Zn(2+) binding site.

It belongs to the histidinol dehydrogenase family. Requires Zn(2+) as cofactor.

It catalyses the reaction L-histidinol + 2 NAD(+) + H2O = L-histidine + 2 NADH + 3 H(+). It functions in the pathway amino-acid biosynthesis; L-histidine biosynthesis; L-histidine from 5-phospho-alpha-D-ribose 1-diphosphate: step 9/9. Catalyzes the sequential NAD-dependent oxidations of L-histidinol to L-histidinaldehyde and then to L-histidine. The chain is Histidinol dehydrogenase from Xylella fastidiosa (strain 9a5c).